Reading from the N-terminus, the 200-residue chain is Adenylate kinase (200 aa).

11–16 (GAGKGT) is a binding site for ATP. The interval 31-60 (STGDIFRQNIKDRTELGQQVQALVDAGNYV) is NMP. Residues T32, R37, 58–60 (NYV), 86–89 (GYPR), and Q93 contribute to the AMP site. Positions 127-137 (RRAAEQGRADD) are LID. ATP is bound at residue R128. 2 residues coordinate AMP: R134 and R145. G173 is an ATP binding site.

Belongs to the adenylate kinase family. Monomer.

It localises to the cytoplasm. The enzyme catalyses AMP + ATP = 2 ADP. Its pathway is purine metabolism; AMP biosynthesis via salvage pathway; AMP from ADP: step 1/1. Catalyzes the reversible transfer of the terminal phosphate group between ATP and AMP. Plays an important role in cellular energy homeostasis and in adenine nucleotide metabolism. This Clavibacter michiganensis subsp. michiganensis (strain NCPPB 382) protein is Adenylate kinase.